The chain runs to 364 residues: Spermidine/putrescine import ATP-binding protein PotA (364 aa).

The region spanning 5–235 (LSFKDVSKGF…PVNRFVADFI (231 aa)) is the ABC transporter domain. 37 to 44 (GPSGCGKT) is an ATP binding site.

Belongs to the ABC transporter superfamily. Spermidine/putrescine importer (TC 3.A.1.11.1) family. In terms of assembly, the complex is composed of two ATP-binding proteins (PotA), two transmembrane proteins (PotB and PotC) and a solute-binding protein (PotD).

It is found in the cell membrane. It catalyses the reaction ATP + H2O + polyamine-[polyamine-binding protein]Side 1 = ADP + phosphate + polyamineSide 2 + [polyamine-binding protein]Side 1.. In terms of biological role, part of the ABC transporter complex PotABCD involved in spermidine/putrescine import. Responsible for energy coupling to the transport system. The polypeptide is Spermidine/putrescine import ATP-binding protein PotA (Staphylococcus epidermidis (strain ATCC 12228 / FDA PCI 1200)).